Here is a 229-residue protein sequence, read N- to C-terminus: Uracil-DNA glycosylase (229 aa).

The active-site Proton acceptor is Asp-64.

This sequence belongs to the uracil-DNA glycosylase (UDG) superfamily. UNG family.

Its subcellular location is the cytoplasm. It catalyses the reaction Hydrolyzes single-stranded DNA or mismatched double-stranded DNA and polynucleotides, releasing free uracil.. Excises uracil residues from the DNA which can arise as a result of misincorporation of dUMP residues by DNA polymerase or due to deamination of cytosine. The chain is Uracil-DNA glycosylase from Escherichia coli (strain 55989 / EAEC).